Here is a 74-residue protein sequence, read N- to C-terminus: Metallothionein-like protein type 2 (74 aa).

This sequence belongs to the metallothionein superfamily. Type 15 family.

Its function is as follows. Metallothioneins have a high content of cysteine residues that bind various heavy metals. This is Metallothionein-like protein type 2 from Nicotiana plumbaginifolia (Leadwort-leaved tobacco).